Here is a 198-residue protein sequence, read N- to C-terminus: Superoxide dismutase [Fe] (198 aa).

Fe(3+) contacts are provided by His-27, His-74, Asp-157, and His-161.

This sequence belongs to the iron/manganese superoxide dismutase family. In terms of assembly, homodimer. Fe(3+) serves as cofactor.

It carries out the reaction 2 superoxide + 2 H(+) = H2O2 + O2. Functionally, destroys superoxide anion radicals which are normally produced within the cells and which are toxic to biological systems. The sequence is that of Superoxide dismutase [Fe] (sodB) from Pseudomonas putida (Arthrobacter siderocapsulatus).